A 183-amino-acid polypeptide reads, in one-letter code: Apo-citrate lyase phosphoribosyl-dephospho-CoA transferase (183 aa).

This sequence belongs to the CitX family.

It catalyses the reaction apo-[citrate lyase ACP] + 2'-(5''-triphospho-alpha-D-ribosyl)-3'-dephospho-CoA = holo-[citrate lyase ACP] + diphosphate. In terms of biological role, transfers 2-(5''-triphosphoribosyl)-3'-dephosphocoenzyme-A on a serine residue to the apo-acyl carrier protein (gamma chain) of the citrate lyase to yield holo-acyl carrier protein. The polypeptide is Apo-citrate lyase phosphoribosyl-dephospho-CoA transferase (Escherichia coli O7:K1 (strain IAI39 / ExPEC)).